A 183-amino-acid chain; its full sequence is Hypoxanthine-guanine-xanthine phosphoribosyltransferase (183 aa).

Residues 102-110 (EDIIDTGLT), Lys-134, and Asp-163 each bind GMP. Asp-106 serves as the catalytic Proton acceptor. Asp-163 contributes to the Mg(2+) binding site.

In terms of assembly, homodimer. Mg(2+) is required as a cofactor.

It localises to the cytoplasm. The catalysed reaction is IMP + diphosphate = hypoxanthine + 5-phospho-alpha-D-ribose 1-diphosphate. It catalyses the reaction GMP + diphosphate = guanine + 5-phospho-alpha-D-ribose 1-diphosphate. The enzyme catalyses XMP + diphosphate = xanthine + 5-phospho-alpha-D-ribose 1-diphosphate. The protein operates within purine metabolism; GMP biosynthesis via salvage pathway; GMP from guanine: step 1/1. Its pathway is purine metabolism; IMP biosynthesis via salvage pathway; IMP from hypoxanthine: step 1/1. It participates in purine metabolism; XMP biosynthesis via salvage pathway; XMP from xanthine: step 1/1. Functionally, essential in nucleic acid metabolism of T.foetus because the parasite is unable to synthesize purine nucleotides de novo and relies on the HGXPRTase activities for its purine requirements by salvaging purine bases from the host. Works with guanine, hypoxanthine and xanthine. This Tritrichomonas foetus (Trichomonas foetus) protein is Hypoxanthine-guanine-xanthine phosphoribosyltransferase (HPT).